Consider the following 160-residue polypeptide: Cyclic pyranopterin monophosphate synthase (160 aa).

Residues 75–77 and 113–114 contribute to the substrate site; these read LCH and ME. Asp-128 is a catalytic residue.

This sequence belongs to the MoaC family. As to quaternary structure, homohexamer; trimer of dimers.

It carries out the reaction (8S)-3',8-cyclo-7,8-dihydroguanosine 5'-triphosphate = cyclic pyranopterin phosphate + diphosphate. It participates in cofactor biosynthesis; molybdopterin biosynthesis. Functionally, catalyzes the conversion of (8S)-3',8-cyclo-7,8-dihydroguanosine 5'-triphosphate to cyclic pyranopterin monophosphate (cPMP). The sequence is that of Cyclic pyranopterin monophosphate synthase from Methylobacterium nodulans (strain LMG 21967 / CNCM I-2342 / ORS 2060).